The sequence spans 192 residues: U1 small nuclear ribonucleoprotein C (192 aa).

The Matrin-type zinc-finger motif lies at 4-36 (YYCEYCDIYLTHSSPVGRRQHNQGRKHISAKIE). Residues 118-192 (PGANKYPNNN…FVNKNSEQPN (75 aa)) are disordered. A compositionally biased stretch (polar residues) spans 133–154 (RISNTPKPYNNYTNKPITNSPY). The span at 164–173 (NNENSNNFSN) shows a compositional bias: low complexity. The span at 174 to 192 (YQMNKDNSNFVNKNSEQPN) shows a compositional bias: polar residues.

The protein belongs to the U1 small nuclear ribonucleoprotein C family. In terms of assembly, U1 snRNP is composed of the 7 core Sm proteins B/B', D1, D2, D3, E, F and G that assemble in a heptameric protein ring on the Sm site of the small nuclear RNA to form the core snRNP, and at least 3 U1 snRNP-specific proteins U1-70K, U1-A and U1-C. U1-C interacts with U1 snRNA and the 5' splice-site region of the pre-mRNA.

It localises to the nucleus. Its function is as follows. Component of the spliceosomal U1 snRNP, which is essential for recognition of the pre-mRNA 5' splice-site and the subsequent assembly of the spliceosome. U1-C is directly involved in initial 5' splice-site recognition for both constitutive and regulated alternative splicing. The interaction with the 5' splice-site seems to precede base-pairing between the pre-mRNA and the U1 snRNA. Stimulates commitment or early (E) complex formation by stabilizing the base pairing of the 5' end of the U1 snRNA and the 5' splice-site region. The protein is U1 small nuclear ribonucleoprotein C of Plasmodium chabaudi chabaudi.